The chain runs to 728 residues: 1,4-alpha-glucan branching enzyme GlgB (728 aa).

The active-site Nucleophile is Asp405. Catalysis depends on Glu458, which acts as the Proton donor. Positions 686–712 (YHGSNAGNAGAVQSDEHESHGRPHSLS) are disordered.

Belongs to the glycosyl hydrolase 13 family. GlgB subfamily. Monomer.

It catalyses the reaction Transfers a segment of a (1-&gt;4)-alpha-D-glucan chain to a primary hydroxy group in a similar glucan chain.. Its pathway is glycan biosynthesis; glycogen biosynthesis. Its function is as follows. Catalyzes the formation of the alpha-1,6-glucosidic linkages in glycogen by scission of a 1,4-alpha-linked oligosaccharide from growing alpha-1,4-glucan chains and the subsequent attachment of the oligosaccharide to the alpha-1,6 position. This chain is 1,4-alpha-glucan branching enzyme GlgB, found in Enterobacter sp. (strain 638).